A 394-amino-acid chain; its full sequence is Penicillopepsin-3 (394 aa).

The N-terminal stretch at 1-20 is a signal peptide; the sequence is MVSFTQLQLAFLGLSALGAA. A propeptide spans 21 to 70 (activation peptide); it reads VPVTGTSEKKTFSLNQVKVAGTKTKNPAEHYANALRKYGAEVPSHVLAAA. One can recognise a Peptidase A1 domain in the interval 87–392; the sequence is YLTPIDVGGT…DASGPRLGFA (306 aa). Residues aspartate 103 and aspartate 284 contribute to the active site. A disulfide bridge links cysteine 320 with cysteine 355.

This sequence belongs to the peptidase A1 family. As to quaternary structure, monomer.

It localises to the secreted. It catalyses the reaction Hydrolysis of proteins with broad specificity similar to that of pepsin A, preferring hydrophobic residues at P1 and P1', but also cleaving 20-Gly-|-Glu-21 in the B chain of insulin. Clots milk, and activates trypsinogen.. In terms of biological role, secreted aspartic endopeptidase that allows assimilation of proteinaceous substrates. The scissile peptide bond is attacked by a nucleophilic water molecule activated by two aspartic residues in the active site. Shows a broad primary substrate specificity. Favors hydrophobic residues at the P1 and P1' positions, but can also activate trypsinogen and hydrolyze the B chain of insulin between positions 'Gly-20' and 'Glu-21'. The sequence is that of Penicillopepsin-3 from Penicillium janthinellum (Penicillium vitale).